A 741-amino-acid chain; its full sequence is Phosphoribosylformylglycinamidine synthase subunit PurL (741 aa).

The active site involves His54. Positions 57 and 98 each coordinate ATP. Glu100 is a binding site for Mg(2+). Substrate contacts are provided by residues 101-104 and Arg123; that span reads SHNH. Catalysis depends on His102, which acts as the Proton acceptor. Asp124 serves as a coordination point for Mg(2+). Gln251 provides a ligand contact to substrate. Position 279 (Asp279) interacts with Mg(2+). Substrate is bound at residue 323–325; the sequence is ESQ. Residues Asp510 and Gly547 each contribute to the ATP site. Residue Asn548 coordinates Mg(2+). Residue Ser550 participates in substrate binding.

It belongs to the FGAMS family. In terms of assembly, monomer. Part of the FGAM synthase complex composed of 1 PurL, 1 PurQ and 2 PurS subunits.

The protein resides in the cytoplasm. It carries out the reaction N(2)-formyl-N(1)-(5-phospho-beta-D-ribosyl)glycinamide + L-glutamine + ATP + H2O = 2-formamido-N(1)-(5-O-phospho-beta-D-ribosyl)acetamidine + L-glutamate + ADP + phosphate + H(+). The protein operates within purine metabolism; IMP biosynthesis via de novo pathway; 5-amino-1-(5-phospho-D-ribosyl)imidazole from N(2)-formyl-N(1)-(5-phospho-D-ribosyl)glycinamide: step 1/2. In terms of biological role, part of the phosphoribosylformylglycinamidine synthase complex involved in the purines biosynthetic pathway. Catalyzes the ATP-dependent conversion of formylglycinamide ribonucleotide (FGAR) and glutamine to yield formylglycinamidine ribonucleotide (FGAM) and glutamate. The FGAM synthase complex is composed of three subunits. PurQ produces an ammonia molecule by converting glutamine to glutamate. PurL transfers the ammonia molecule to FGAR to form FGAM in an ATP-dependent manner. PurS interacts with PurQ and PurL and is thought to assist in the transfer of the ammonia molecule from PurQ to PurL. In Picrophilus torridus (strain ATCC 700027 / DSM 9790 / JCM 10055 / NBRC 100828 / KAW 2/3), this protein is Phosphoribosylformylglycinamidine synthase subunit PurL.